Here is a 523-residue protein sequence, read N- to C-terminus: Melanoma-associated antigen E2 (523 aa).

MAGE domains follow at residues 88–288 (LEDR…YNKA) and 311–502 (MNDK…YREA).

The chain is Melanoma-associated antigen E2 (MAGEE2) from Homo sapiens (Human).